The chain runs to 159 residues: ATP synthase subunit b (159 aa).

The helical transmembrane segment at 4–24 (VGINGTLIVQLVTFVILVALL) threads the bilayer.

The protein belongs to the ATPase B chain family. As to quaternary structure, F-type ATPases have 2 components, F(1) - the catalytic core - and F(0) - the membrane proton channel. F(1) has five subunits: alpha(3), beta(3), gamma(1), delta(1), epsilon(1). F(0) has three main subunits: a(1), b(2) and c(10-14). The alpha and beta chains form an alternating ring which encloses part of the gamma chain. F(1) is attached to F(0) by a central stalk formed by the gamma and epsilon chains, while a peripheral stalk is formed by the delta and b chains.

Its subcellular location is the cell inner membrane. In terms of biological role, f(1)F(0) ATP synthase produces ATP from ADP in the presence of a proton or sodium gradient. F-type ATPases consist of two structural domains, F(1) containing the extramembraneous catalytic core and F(0) containing the membrane proton channel, linked together by a central stalk and a peripheral stalk. During catalysis, ATP synthesis in the catalytic domain of F(1) is coupled via a rotary mechanism of the central stalk subunits to proton translocation. Functionally, component of the F(0) channel, it forms part of the peripheral stalk, linking F(1) to F(0). In Acidithiobacillus ferrooxidans (strain ATCC 23270 / DSM 14882 / CIP 104768 / NCIMB 8455) (Ferrobacillus ferrooxidans (strain ATCC 23270)), this protein is ATP synthase subunit b.